Here is a 203-residue protein sequence, read N- to C-terminus: N-(5'-phosphoribosyl)anthranilate isomerase (203 aa).

This sequence belongs to the TrpF family.

It carries out the reaction N-(5-phospho-beta-D-ribosyl)anthranilate = 1-(2-carboxyphenylamino)-1-deoxy-D-ribulose 5-phosphate. It functions in the pathway amino-acid biosynthesis; L-tryptophan biosynthesis; L-tryptophan from chorismate: step 3/5. In Sulfurihydrogenibium sp. (strain YO3AOP1), this protein is N-(5'-phosphoribosyl)anthranilate isomerase.